A 272-amino-acid polypeptide reads, in one-letter code: Acetylglutamate kinase (272 aa).

Substrate-binding positions include 46–47 (GA), R68, and N166.

This sequence belongs to the acetylglutamate kinase family. ArgB subfamily.

The protein resides in the cytoplasm. The enzyme catalyses N-acetyl-L-glutamate + ATP = N-acetyl-L-glutamyl 5-phosphate + ADP. Its pathway is amino-acid biosynthesis; L-arginine biosynthesis; N(2)-acetyl-L-ornithine from L-glutamate: step 2/4. Its function is as follows. Catalyzes the ATP-dependent phosphorylation of N-acetyl-L-glutamate. This is Acetylglutamate kinase from Dehalococcoides mccartyi (strain ATCC BAA-2100 / JCM 16839 / KCTC 5957 / BAV1).